The chain runs to 64 residues: Conotoxin reg3k (64 aa).

An N-terminal signal peptide occupies residues 1–20 (MMFKLGVLLTICLLLFPLTA). A propeptide spanning residues 21 to 48 (LQLDWDQPGDHMLDISSEIDDRWFDPVR) is cleaved from the precursor. Intrachain disulfides connect Cys50–Cys60, Cys51–Cys58, and Cys56–Cys61. Pro59 bears the 4-hydroxyproline mark.

As to expression, expressed by the venom duct.

It is found in the secreted. The polypeptide is Conotoxin reg3k (Conus regius (Crown cone)).